The sequence spans 341 residues: tRNA N6-adenosine threonylcarbamoyltransferase (341 aa).

Residues His-120 and His-124 each coordinate Fe cation. Substrate is bound by residues 142–146 (VVSGG), Asp-175, Gly-188, Asp-192, and Asn-281. Position 310 (Asp-310) interacts with Fe cation.

This sequence belongs to the KAE1 / TsaD family. Fe(2+) serves as cofactor.

It is found in the cytoplasm. It catalyses the reaction L-threonylcarbamoyladenylate + adenosine(37) in tRNA = N(6)-L-threonylcarbamoyladenosine(37) in tRNA + AMP + H(+). Its function is as follows. Required for the formation of a threonylcarbamoyl group on adenosine at position 37 (t(6)A37) in tRNAs that read codons beginning with adenine. Is involved in the transfer of the threonylcarbamoyl moiety of threonylcarbamoyl-AMP (TC-AMP) to the N6 group of A37, together with TsaE and TsaB. TsaD likely plays a direct catalytic role in this reaction. In Anoxybacillus flavithermus (strain DSM 21510 / WK1), this protein is tRNA N6-adenosine threonylcarbamoyltransferase.